The primary structure comprises 245 residues: tRNA1(Val) (adenine(37)-N6)-methyltransferase (245 aa).

Belongs to the methyltransferase superfamily. tRNA (adenine-N(6)-)-methyltransferase family.

It localises to the cytoplasm. The enzyme catalyses adenosine(37) in tRNA1(Val) + S-adenosyl-L-methionine = N(6)-methyladenosine(37) in tRNA1(Val) + S-adenosyl-L-homocysteine + H(+). Functionally, specifically methylates the adenine in position 37 of tRNA(1)(Val) (anticodon cmo5UAC). This Cronobacter sakazakii (strain ATCC BAA-894) (Enterobacter sakazakii) protein is tRNA1(Val) (adenine(37)-N6)-methyltransferase.